The primary structure comprises 161 residues: Urease accessory protein UreE (161 aa).

Belongs to the UreE family.

The protein resides in the cytoplasm. Its function is as follows. Involved in urease metallocenter assembly. Binds nickel. Probably functions as a nickel donor during metallocenter assembly. The sequence is that of Urease accessory protein UreE from Arthrobacter sp. (strain FB24).